The following is a 132-amino-acid chain: MIVRNVKDVIGTPDEVRTDTWVSRRVLLKKDKMGFSFHETTIFPGTRTHIHYKNHLEAVWCIEGDGSIETIADGKRYDLGPGVVYALNEHDEHWLCGGKEPLRVICVFNPPLTGQEVHDADGVYALPQAETA.

Belongs to the ectoine synthase family.

The catalysed reaction is (2S)-4-acetamido-2-aminobutanoate = L-ectoine + H2O. It participates in amine and polyamine biosynthesis; ectoine biosynthesis; L-ectoine from L-aspartate 4-semialdehyde: step 3/3. Catalyzes the circularization of gamma-N-acetyl-alpha,gamma-diaminobutyric acid (ADABA) to ectoine (1,4,5,6-tetrahydro-2-methyl-4-pyrimidine carboxylic acid), which is an excellent osmoprotectant. The sequence is that of L-ectoine synthase from Bordetella avium (strain 197N).